A 372-amino-acid polypeptide reads, in one-letter code: MRINMLFIVAFSFLVSVRSLPMRPTLKYESIFNFGDSLSDTGNFLLSGDVDSPNIGRLPYGQTFFNRSTGRCSDGRLIIDFIAEASGLPYIPPYLQSLRTNDSVDFKRGANFAVAGATANEFSFFKNRGLSVTLLTNKTLDIQLDWFKKLKPSLCKTKPECEQYFRKSLFLVGEIGGNDYNYPLLAFRSFKHAMDLVPFVINKIMDVTSALIEEGAMTLIVPGNLPIGCSAALLERFNDNSGWLYDSRNQCYMPLNNLAKLHNDKLKKGLAALRKKYPYAKIIYADYYSSAMQFFNSPSKYGFTGSVLKACCGGGDGRYNVQPNVRCGEKGSTTCEDPSTYANWDGIHLTEAAYRHIATGLISGRFTMPTYN.

A signal peptide spans 1–19 (MRINMLFIVAFSFLVSVRS). The active-site Nucleophile is Ser-37. 3 N-linked (GlcNAc...) asparagine glycosylation sites follow: Asn-66, Asn-101, and Asn-137. Residues Asp-345 and His-348 contribute to the active site.

The protein belongs to the 'GDSL' lipolytic enzyme family.

It localises to the secreted. This chain is GDSL esterase/lipase At5g45910, found in Arabidopsis thaliana (Mouse-ear cress).